A 160-amino-acid chain; its full sequence is MRCPSCNSLDTQVKDSRPTEDSAVIRRRRVCMACNFRFTTFERVQLRELTVIKRNGRRVPFDRDKLVRSLQISLRKRPVEPERIETMVSAIVRELESGGEAEISSETIGEIVMEHLRSLDDVAYVRFASVYRNFREAKDFEAVLGELSSEDDPRRVPLRK.

Polar residues predominate over residues 1–11 (MRCPSCNSLDT). Positions 1 to 20 (MRCPSCNSLDTQVKDSRPTE) are disordered. A zinc finger spans residues 3-34 (CPSCNSLDTQVKDSRPTEDSAVIRRRRVCMAC). An ATP-cone domain is found at 49 to 139 (LTVIKRNGRR…VYRNFREAKD (91 aa)).

The protein belongs to the NrdR family. The cofactor is Zn(2+).

Negatively regulates transcription of bacterial ribonucleotide reductase nrd genes and operons by binding to NrdR-boxes. This chain is Transcriptional repressor NrdR, found in Nitrobacter winogradskyi (strain ATCC 25391 / DSM 10237 / CIP 104748 / NCIMB 11846 / Nb-255).